Reading from the N-terminus, the 93-residue chain is Small ribosomal subunit protein bS20 (93 aa).

A disordered region spans residues 72–93 (KNTASRKKSRLTRKFNSVYKAS). The span at 74 to 84 (TASRKKSRLTR) shows a compositional bias: basic residues.

Belongs to the bacterial ribosomal protein bS20 family.

In terms of biological role, binds directly to 16S ribosomal RNA. The protein is Small ribosomal subunit protein bS20 of Carboxydothermus hydrogenoformans (strain ATCC BAA-161 / DSM 6008 / Z-2901).